We begin with the raw amino-acid sequence, 156 residues long: Ribosome maturation factor RimP (156 aa).

Belongs to the RimP family.

The protein resides in the cytoplasm. In terms of biological role, required for maturation of 30S ribosomal subunits. The protein is Ribosome maturation factor RimP of Gloeobacter violaceus (strain ATCC 29082 / PCC 7421).